Consider the following 521-residue polypeptide: Calcium-dependent protein kinase 33 (521 aa).

Gly2 is lipidated: N-myristoyl glycine. The disordered stretch occupies residues 15–56 (PQQNGERSVEIENRRRSTHQDPSKISTGTNQPPPWRNPAKHS). Over residues 21–36 (RSVEIENRRRSTHQDP) the composition is skewed to basic and acidic residues. Positions 73–331 (YTLSKELGRG…AAEVLKHPWL (259 aa)) constitute a Protein kinase domain. ATP contacts are provided by residues 79-87 (LGRGQFGVT) and Lys102. Residue Asp197 is the Proton acceptor of the active site. Phosphoserine is present on Ser237. The autoinhibitory domain stretch occupies residues 337 to 367 (ASDKPIDSAVLSRMKQFRAMNKLKKLALKVI). EF-hand domains lie at 374–409 (EEIQ…LGSR), 410–445 (LTEA…RHRL), 446–481 (ESNE…YGMG), and 482–516 (DDAT…GNPQ). 20 residues coordinate Ca(2+): Asp387, Asp389, Ser391, Thr393, Glu398, Asp423, Asp425, Asn427, Ser429, Glu434, Asp459, Asp461, Ser463, Tyr465, Glu470, Asp494, Asp496, Asp498, Arg500, and Glu505.

The protein belongs to the protein kinase superfamily. Ser/Thr protein kinase family. CDPK subfamily. As to quaternary structure, interacts with THI1. Interacts with FD and FDP. Autophosphorylated. Expressed in primary roots, leaves, inflorescences, siliques and guard cells. Expressed in the shoot apical meristem.

The protein localises to the cell membrane. It localises to the nucleus. It is found in the cytoplasm. It catalyses the reaction L-seryl-[protein] + ATP = O-phospho-L-seryl-[protein] + ADP + H(+). It carries out the reaction L-threonyl-[protein] + ATP = O-phospho-L-threonyl-[protein] + ADP + H(+). Its activity is regulated as follows. Activated by calcium. Autophosphorylation may play an important role in the regulation of the kinase activity. Repressed by THI1 through a negative regulation of the autophosphorylation activity in the presence of Ca(2+). Ca(2+)-dependent protein kinase. Negative regulator of stomatal closure and slow anion currents. Unable to phosphorylate THI1 in vitro, but the kinase activity is essential for the stomatal closure regulation. Phosphorylates FD. May play a role in signal transduction pathways that involve calcium as a second messenger. The sequence is that of Calcium-dependent protein kinase 33 from Arabidopsis thaliana (Mouse-ear cress).